Here is a 484-residue protein sequence, read N- to C-terminus: Aspartyl/glutamyl-tRNA(Asn/Gln) amidotransferase subunit B (484 aa).

It belongs to the GatB/GatE family. GatB subfamily. Heterotrimer of A, B and C subunits.

The catalysed reaction is L-glutamyl-tRNA(Gln) + L-glutamine + ATP + H2O = L-glutaminyl-tRNA(Gln) + L-glutamate + ADP + phosphate + H(+). It carries out the reaction L-aspartyl-tRNA(Asn) + L-glutamine + ATP + H2O = L-asparaginyl-tRNA(Asn) + L-glutamate + ADP + phosphate + 2 H(+). Allows the formation of correctly charged Asn-tRNA(Asn) or Gln-tRNA(Gln) through the transamidation of misacylated Asp-tRNA(Asn) or Glu-tRNA(Gln) in organisms which lack either or both of asparaginyl-tRNA or glutaminyl-tRNA synthetases. The reaction takes place in the presence of glutamine and ATP through an activated phospho-Asp-tRNA(Asn) or phospho-Glu-tRNA(Gln). The polypeptide is Aspartyl/glutamyl-tRNA(Asn/Gln) amidotransferase subunit B (Bordetella bronchiseptica (strain ATCC BAA-588 / NCTC 13252 / RB50) (Alcaligenes bronchisepticus)).